The chain runs to 174 residues: Putative serine protease 46 (174 aa).

The Peptidase S1 domain occupies 43-174; it reads VVKGKLVEVG…IGWGTTGKKG (132 aa). An intrachain disulfide couples cysteine 68 to cysteine 84. Active-site charge relay system residues include histidine 83 and aspartate 128.

The protein belongs to the peptidase S1 family.

The protein is Putative serine protease 46 of Homo sapiens (Human).